A 487-amino-acid chain; its full sequence is Phosphatidylserine synthase 2 (487 aa).

Over residues 1–10 (MRRGERRDAG) the composition is skewed to basic and acidic residues. The disordered stretch occupies residues 1–50 (MRRGERRDAGGPRPESPVPAGRASLEEPPDGPSAGQATGPGEGRRSTESE). Residues 1-62 (MRRGERRDAG…DDGTNTFFWR (62 aa)) are Cytoplasmic-facing. Phosphoserine is present on residues S16 and S24. A helical membrane pass occupies residues 63–83 (AHTLTVLFILTCTLGYVTLLE). Residues 84–96 (ETPQDTAYNTKRG) lie on the Lumenal side of the membrane. Residues 97-117 (IVASILVFLCFGVTQAKDGPF) traverse the membrane as a helical segment. Residues 118–126 (SRPHPAYWR) lie on the Cytoplasmic side of the membrane. Residues 127-147 (FWLCVSVVYELFLIFILFQTV) form a helical membrane-spanning segment. The Lumenal segment spans residues 148 to 313 (QDGRQFLKYV…EWKPASSLRR (166 aa)). A glycan (N-linked (GlcNAc...) asparagine) is linked at N181. A helical membrane pass occupies residues 314-334 (WLAVCGIILVFLLAELNTFYL). Position 335 (K335) is a topological domain, cytoplasmic. A helical transmembrane segment spans residues 336–356 (FVLWMPPEHYLVLLRLVFFVN). Over 357-376 (VGGVAMREIYDFMDDPKPHK) the chain is Lumenal. A helical membrane pass occupies residues 377–397 (KLGPQAWLVAAITATELLIVV). Over 398 to 403 (KYDPHT) the chain is Cytoplasmic. A helical membrane pass occupies residues 404 to 424 (LTLSLPFYISQCWTLGSVLAL). The Lumenal segment spans residues 425 to 487 (TWTVWRFFLR…AEGEGAPTPN (63 aa)). The segment at 451–487 (KDDQGSTVGNGDQHPLGLDEDLLGPGVAEGEGAPTPN) is disordered. T485 bears the Phosphothreonine mark.

This sequence belongs to the phosphatidyl serine synthase family.

The protein resides in the endoplasmic reticulum membrane. The catalysed reaction is a 1,2-diacyl-sn-glycero-3-phosphoethanolamine + L-serine = a 1,2-diacyl-sn-glycero-3-phospho-L-serine + ethanolamine. It carries out the reaction 1-hexadecanoyl-2-(9Z-octadecenoyl)-sn-glycero-3-phosphoethanolamine + L-serine = 1-hexadecanoyl-2-(9Z-octadecenoyl)-sn-glycero-3-phospho-L-serine + ethanolamine. It catalyses the reaction 1-hexadecanoyl-2-(4Z,7Z,10Z,13Z,16Z,19Z-docosahexaenoyl)-sn-glycero-3-phosphoethanolamine + L-serine = 1-hexadecanoyl-2-(4Z,7Z,10Z,13Z,16Z,19Z-docosahexaenoyl)-sn-glycero-3-phosphoserine + ethanolamine. The enzyme catalyses 1-octadecanoyl-2-(5Z,8Z,11Z,14Z)-eicosatetraenoyl-sn-glycero-3-phosphoethanolamine + L-serine = 1-octadecanoyl-2-(5Z,8Z,11Z,14Z)-eicosatetraenoyl-sn-glycero-3-phosphoserine + ethanolamine. The catalysed reaction is 1-octadecanoyl-2-(4Z,7Z,10Z,13Z,16Z,19Z-docosahexaenoyl)-sn-glycero-3-phosphoethanolamine + L-serine = 1-octadecanoyl-2-(4Z,7Z,10Z,13Z,16Z,19Z-docosahexaenoyl)-sn-glycero-3-phosphoserine + ethanolamine. It carries out the reaction 1-(1Z-octadecenyl)-2-(4Z,7Z,10Z,13Z,16Z,19Z-docosahexaenoyl)-sn-glycero-3-phosphoethanolamine + L-serine = 1-(1Z-octadecenyl)-2-(4Z,7Z,10Z,13Z,16Z,19Z-docosahexaenoyl)-sn-glycero-3-phospho-L-serine + ethanolamine. It catalyses the reaction 1-octadecanoyl-2-(9Z-octadecenoyl)-sn-glycero-3-phosphoethanolamine + L-serine = 1-octadecanoyl-2-(9Z-octadecenoyl)-sn-glycero-3-phospho-L-serine + ethanolamine. The enzyme catalyses 1-(1Z-octadecenyl)-2-(9Z-octadecenoyl)-sn-glycero-3-phosphoethanolamine + L-serine = 1-(1Z-octadecenyl)-2-(9Z-octadecenoyl)-sn-glycero-3-phospho-L-serine + ethanolamine. The catalysed reaction is 1-(1Z-octadecenyl)-2-(5Z,8Z,11Z,14Z- eicosatetraenoyl)-sn-glycero-3-phosphoethanolamine + L-serine = 1-(1Z-octadecenyl)-2-(5Z,8Z,11Z,14Z-eicosatetraenoyl)-sn-glycero-3-phospho-L-serine + ethanolamine. It participates in phospholipid metabolism; phosphatidylserine biosynthesis. Its activity is regulated as follows. Requires calcium ions. Inhibited by exogenous phosphatidylserine. Its function is as follows. Catalyzes a base-exchange reaction in which the polar head group of phosphatidylethanolamine (PE) or phosphatidylcholine (PC) is replaced by L-serine. Catalyzes the conversion of phosphatatidylethanolamine and does not act on phosphatidylcholine. Can utilize both phosphatidylethanolamine (PE) plasmalogen and diacyl PE as substrate and the latter is six times better utilized, indicating the importance of an ester linkage at the sn-1 position. Although it shows no sn-1 fatty acyl preference, exhibits significant preference towards docosahexaenoic acid (22:6n-3) compared with 18:1 or 20:4 at the sn-2 position. The polypeptide is Phosphatidylserine synthase 2 (PTDSS2) (Homo sapiens (Human)).